The sequence spans 134 residues: Lymphocyte antigen 6G (134 aa).

An N-terminal signal peptide occupies residues 1 to 26; it reads MDTCHIAKSCVLILLVVLLCAERAQG. In terms of domain architecture, UPAR/Ly6 spans 27 to 118; the sequence is LECYNCIGVP…PTGGSSWTMA (92 aa). Cystine bridges form between C29–C53, C32–C41, C46–C74, C78–C98, and C99–C104. N105 carries the GPI-anchor amidated asparagine lipid modification. Positions 106 to 134 are cleaved as a propeptide — removed in mature form; that stretch reads AAVPTGGSSWTMAGVLLFSLVSVLLQTFL.

Expressed in bone marrow.

Its subcellular location is the cell membrane. This Mus musculus (Mouse) protein is Lymphocyte antigen 6G (Ly6g).